The primary structure comprises 122 residues: Large ribosomal subunit protein uL14 (122 aa).

Belongs to the universal ribosomal protein uL14 family. As to quaternary structure, part of the 50S ribosomal subunit. Forms a cluster with proteins L3 and L19. In the 70S ribosome, L14 and L19 interact and together make contacts with the 16S rRNA in bridges B5 and B8.

Its function is as follows. Binds to 23S rRNA. Forms part of two intersubunit bridges in the 70S ribosome. The sequence is that of Large ribosomal subunit protein uL14 from Lactobacillus delbrueckii subsp. bulgaricus (strain ATCC BAA-365 / Lb-18).